A 114-amino-acid chain; its full sequence is Iron-sulfur cluster insertion protein ErpA (114 aa).

Residues C42, C106, and C108 each contribute to the iron-sulfur cluster site.

The protein belongs to the HesB/IscA family. In terms of assembly, homodimer. Requires iron-sulfur cluster as cofactor.

Functionally, required for insertion of 4Fe-4S clusters for at least IspG. This is Iron-sulfur cluster insertion protein ErpA from Haemophilus influenzae (strain PittEE).